Consider the following 537-residue polypeptide: Glutamyl-tRNA(Gln) amidotransferase subunit B, chloroplastic/mitochondrial (537 aa).

This sequence belongs to the GatB/GatE family. GatB subfamily. As to quaternary structure, subunit of the heterotrimeric GatCAB amidotransferase (AdT) complex, composed of A, B and C subunits.

It localises to the mitochondrion. The protein localises to the plastid. It is found in the chloroplast. It carries out the reaction L-glutamyl-tRNA(Gln) + L-glutamine + ATP + H2O = L-glutaminyl-tRNA(Gln) + L-glutamate + ADP + phosphate + H(+). In terms of biological role, allows the formation of correctly charged Gln-tRNA(Gln) through the transamidation of misacylated Glu-tRNA(Gln) in chloroplasts and mitochondria. The reaction takes place in the presence of glutamine and ATP through an activated gamma-phospho-Glu-tRNA(Gln). The chain is Glutamyl-tRNA(Gln) amidotransferase subunit B, chloroplastic/mitochondrial from Ostreococcus tauri.